The following is a 575-amino-acid chain: Major outer membrane protein MspA (575 aa).

The signal sequence occupies residues 1–19 (MKKALVFFVALAMIGSVFA).

It localises to the cell outer membrane. Major component of the outer membrane sheath. The protein is Major outer membrane protein MspA (mspA) of Treponema maltophilum.